Here is a 221-residue protein sequence, read N- to C-terminus: MRVVLLGPPGAGKGTQALKIAKEFDIPHISTGDIFRQNLRDNTELGKLAKEYMDKGLLVPDEVTNRIVEDRLEKEDCKKGFLLDGYPRNIPQAEELDKFLEERGHSLTAVINIQVEREALIDRITGRRVCPVCGATYHIKTSPPKVDNVCDKCGSELIQRSDDKLESVVKRLEVYEKETKPLIDYYTKKGILVNIDGNKSIDEVFEDIKKALLGDRRDDIH.

10–15 (GAGKGT) lines the ATP pocket. Residues 30-59 (STGDIFRQNLRDNTELGKLAKEYMDKGLLV) are NMP. AMP-binding positions include threonine 31, arginine 36, 57–59 (LLV), 85–88 (GYPR), and glutamine 92. Residues 126 to 163 (GRRVCPVCGATYHIKTSPPKVDNVCDKCGSELIQRSDD) are LID. ATP is bound at residue arginine 127. The Zn(2+) site is built by cysteine 130 and cysteine 133. 136–137 (TY) contacts ATP. Positions 150 and 153 each coordinate Zn(2+). Residues arginine 160 and arginine 171 each contribute to the AMP site. Lysine 199 is a binding site for ATP.

The protein belongs to the adenylate kinase family. Monomer.

Its subcellular location is the cytoplasm. It carries out the reaction AMP + ATP = 2 ADP. Its pathway is purine metabolism; AMP biosynthesis via salvage pathway; AMP from ADP: step 1/1. In terms of biological role, catalyzes the reversible transfer of the terminal phosphate group between ATP and AMP. Plays an important role in cellular energy homeostasis and in adenine nucleotide metabolism. The sequence is that of Adenylate kinase from Caldanaerobacter subterraneus subsp. tengcongensis (strain DSM 15242 / JCM 11007 / NBRC 100824 / MB4) (Thermoanaerobacter tengcongensis).